Reading from the N-terminus, the 211-residue chain is ATP phosphoribosyltransferase (211 aa).

The protein belongs to the ATP phosphoribosyltransferase family. Short subfamily. Heteromultimer composed of HisG and HisZ subunits.

It localises to the cytoplasm. The enzyme catalyses 1-(5-phospho-beta-D-ribosyl)-ATP + diphosphate = 5-phospho-alpha-D-ribose 1-diphosphate + ATP. It participates in amino-acid biosynthesis; L-histidine biosynthesis; L-histidine from 5-phospho-alpha-D-ribose 1-diphosphate: step 1/9. Its function is as follows. Catalyzes the condensation of ATP and 5-phosphoribose 1-diphosphate to form N'-(5'-phosphoribosyl)-ATP (PR-ATP). Has a crucial role in the pathway because the rate of histidine biosynthesis seems to be controlled primarily by regulation of HisG enzymatic activity. This chain is ATP phosphoribosyltransferase, found in Bacillus cereus (strain ATCC 10987 / NRS 248).